We begin with the raw amino-acid sequence, 101 residues long: Urease subunit beta (101 aa).

The protein belongs to the urease beta subunit family. As to quaternary structure, heterotrimer of UreA (gamma), UreB (beta) and UreC (alpha) subunits. Three heterotrimers associate to form the active enzyme.

It is found in the cytoplasm. The enzyme catalyses urea + 2 H2O + H(+) = hydrogencarbonate + 2 NH4(+). Its pathway is nitrogen metabolism; urea degradation; CO(2) and NH(3) from urea (urease route): step 1/1. This Rhizobium meliloti (strain 1021) (Ensifer meliloti) protein is Urease subunit beta.